An 858-amino-acid polypeptide reads, in one-letter code: Protein translocase subunit SecA (858 aa).

ATP-binding positions include Q85, 103–107 (GEGKT), and D511. The Zn(2+) site is built by C840, C842, C851, and C852.

The protein belongs to the SecA family. As to quaternary structure, monomer and homodimer. Part of the essential Sec protein translocation apparatus which comprises SecA, SecYEG and auxiliary proteins SecDF. Other proteins may also be involved. It depends on Zn(2+) as a cofactor.

It localises to the cell membrane. The protein localises to the cytoplasm. The enzyme catalyses ATP + H2O + cellular proteinSide 1 = ADP + phosphate + cellular proteinSide 2.. Functionally, part of the Sec protein translocase complex. Interacts with the SecYEG preprotein conducting channel. Has a central role in coupling the hydrolysis of ATP to the transfer of proteins into and across the cell membrane, serving as an ATP-driven molecular motor driving the stepwise translocation of polypeptide chains across the membrane. The polypeptide is Protein translocase subunit SecA (Lachnoclostridium phytofermentans (strain ATCC 700394 / DSM 18823 / ISDg) (Clostridium phytofermentans)).